The following is a 143-amino-acid chain: Glutamate-rich protein 4 (143 aa).

Residues 90-106 (LEEEEEDDDEEEQEEEG) are compositionally biased toward acidic residues. The disordered stretch occupies residues 90–143 (LEEEEEDDDEEEQEEEGEGKNCVEENKGLQGKQGEKCSGNPYPAQRLPDFEMTI). A compositionally biased stretch (basic and acidic residues) spans 107-116 (EGKNCVEENK).

This is Glutamate-rich protein 4 (Erich4) from Rattus norvegicus (Rat).